The primary structure comprises 510 residues: tRNA-2-methylthio-N(6)-dimethylallyladenosine synthase (510 aa).

In terms of domain architecture, MTTase N-terminal spans 19 to 144; sequence RTYQVRTFGC…LPVLLERARH (126 aa). The [4Fe-4S] cluster site is built by Cys28, Cys73, Cys107, Cys181, Cys185, and Cys188. The Radical SAM core domain maps to 167–397; sequence RESPYAAWVS…TALQDRITYE (231 aa). In terms of domain architecture, TRAM spans 400 to 470; the sequence is QAQTGRTLEV…PHYLEADDVS (71 aa). Basic and acidic residues predominate over residues 482 to 492; the sequence is AWEARQARPEP. A disordered region spans residues 482 to 510; that stretch reads AWEARQARPEPESTGPRPVGLGLPTLRRA.

This sequence belongs to the methylthiotransferase family. MiaB subfamily. As to quaternary structure, monomer. [4Fe-4S] cluster is required as a cofactor.

It is found in the cytoplasm. The enzyme catalyses N(6)-dimethylallyladenosine(37) in tRNA + (sulfur carrier)-SH + AH2 + 2 S-adenosyl-L-methionine = 2-methylsulfanyl-N(6)-dimethylallyladenosine(37) in tRNA + (sulfur carrier)-H + 5'-deoxyadenosine + L-methionine + A + S-adenosyl-L-homocysteine + 2 H(+). Catalyzes the methylthiolation of N6-(dimethylallyl)adenosine (i(6)A), leading to the formation of 2-methylthio-N6-(dimethylallyl)adenosine (ms(2)i(6)A) at position 37 in tRNAs that read codons beginning with uridine. In Kineococcus radiotolerans (strain ATCC BAA-149 / DSM 14245 / SRS30216), this protein is tRNA-2-methylthio-N(6)-dimethylallyladenosine synthase.